The following is a 180-amino-acid chain: tRNA-splicing endonuclease (180 aa).

Residues Tyr117, His125, and Lys156 contribute to the active site.

The protein belongs to the tRNA-intron endonuclease family. Archaeal short subfamily. Homotetramer; although the tetramer contains four active sites, only two participate in the cleavage. Therefore, it should be considered as a dimer of dimers.

The enzyme catalyses pretRNA = a 3'-half-tRNA molecule with a 5'-OH end + a 5'-half-tRNA molecule with a 2',3'-cyclic phosphate end + an intron with a 2',3'-cyclic phosphate and a 5'-hydroxyl terminus.. Endonuclease that removes tRNA introns. Cleaves pre-tRNA at the 5'- and 3'-splice sites to release the intron. The products are an intron and two tRNA half-molecules bearing 2',3' cyclic phosphate and 5'-OH termini. Recognizes a pseudosymmetric substrate in which 2 bulged loops of 3 bases are separated by a stem of 4 bp. The polypeptide is tRNA-splicing endonuclease (Sulfurisphaera tokodaii (strain DSM 16993 / JCM 10545 / NBRC 100140 / 7) (Sulfolobus tokodaii)).